A 126-amino-acid polypeptide reads, in one-letter code: Aspartate 1-decarboxylase (126 aa).

The Schiff-base intermediate with substrate; via pyruvic acid role is filled by Ser-25. A Pyruvic acid (Ser) modification is found at Ser-25. Thr-57 serves as a coordination point for substrate. The active-site Proton donor is the Tyr-58. 73-75 serves as a coordination point for substrate; the sequence is GAA.

Belongs to the PanD family. Heterooctamer of four alpha and four beta subunits. It depends on pyruvate as a cofactor. Post-translationally, is synthesized initially as an inactive proenzyme, which is activated by self-cleavage at a specific serine bond to produce a beta-subunit with a hydroxyl group at its C-terminus and an alpha-subunit with a pyruvoyl group at its N-terminus.

The protein resides in the cytoplasm. The catalysed reaction is L-aspartate + H(+) = beta-alanine + CO2. The protein operates within cofactor biosynthesis; (R)-pantothenate biosynthesis; beta-alanine from L-aspartate: step 1/1. Catalyzes the pyruvoyl-dependent decarboxylation of aspartate to produce beta-alanine. This chain is Aspartate 1-decarboxylase, found in Tolumonas auensis (strain DSM 9187 / NBRC 110442 / TA 4).